A 271-amino-acid polypeptide reads, in one-letter code: Formamidopyrimidine-DNA glycosylase (271 aa).

The active-site Schiff-base intermediate with DNA is Pro2. Catalysis depends on Glu3, which acts as the Proton donor. Lys58 serves as the catalytic Proton donor; for beta-elimination activity. DNA contacts are provided by His91, Arg110, and Arg152. An FPG-type zinc finger spans residues 237–271; that stretch reads SVYGRNDAPCPGCGAPIRRSRQGGRSTYFCDRCQH. Catalysis depends on Arg261, which acts as the Proton donor; for delta-elimination activity.

This sequence belongs to the FPG family. As to quaternary structure, monomer. The cofactor is Zn(2+).

The catalysed reaction is Hydrolysis of DNA containing ring-opened 7-methylguanine residues, releasing 2,6-diamino-4-hydroxy-5-(N-methyl)formamidopyrimidine.. It carries out the reaction 2'-deoxyribonucleotide-(2'-deoxyribose 5'-phosphate)-2'-deoxyribonucleotide-DNA = a 3'-end 2'-deoxyribonucleotide-(2,3-dehydro-2,3-deoxyribose 5'-phosphate)-DNA + a 5'-end 5'-phospho-2'-deoxyribonucleoside-DNA + H(+). Involved in base excision repair of DNA damaged by oxidation or by mutagenic agents. Acts as a DNA glycosylase that recognizes and removes damaged bases. Has a preference for oxidized purines, such as 7,8-dihydro-8-oxoguanine (8-oxoG). Has AP (apurinic/apyrimidinic) lyase activity and introduces nicks in the DNA strand. Cleaves the DNA backbone by beta-delta elimination to generate a single-strand break at the site of the removed base with both 3'- and 5'-phosphates. The polypeptide is Formamidopyrimidine-DNA glycosylase (Geotalea uraniireducens (strain Rf4) (Geobacter uraniireducens)).